The sequence spans 310 residues: Ribosomal RNA small subunit methyltransferase H (310 aa).

S-adenosyl-L-methionine-binding positions include Gly-32–His-34, Asp-52, Phe-79, Asp-100, and Gln-107.

Belongs to the methyltransferase superfamily. RsmH family.

It localises to the cytoplasm. The catalysed reaction is cytidine(1402) in 16S rRNA + S-adenosyl-L-methionine = N(4)-methylcytidine(1402) in 16S rRNA + S-adenosyl-L-homocysteine + H(+). Its function is as follows. Specifically methylates the N4 position of cytidine in position 1402 (C1402) of 16S rRNA. This Bacillus anthracis (strain A0248) protein is Ribosomal RNA small subunit methyltransferase H.